The following is a 330-amino-acid chain: Protein qutG (330 aa).

Residues glutamate 78, aspartate 100, leucine 102, aspartate 103, and aspartate 251 each contribute to the Mg(2+) site. Glutamate 78 provides a ligand contact to substrate. Residues 102–105 (LDGT) and aspartate 251 contribute to the substrate site.

Belongs to the inositol monophosphatase superfamily.

Not known. Probably involved in quinate metabolism. The protein is Protein qutG (qutG) of Emericella nidulans (strain FGSC A4 / ATCC 38163 / CBS 112.46 / NRRL 194 / M139) (Aspergillus nidulans).